A 392-amino-acid polypeptide reads, in one-letter code: Anhydro-N-acetylmuramic acid kinase (392 aa).

An ATP-binding site is contributed by 22–29 (GTSMDGVD).

It belongs to the anhydro-N-acetylmuramic acid kinase family.

The enzyme catalyses 1,6-anhydro-N-acetyl-beta-muramate + ATP + H2O = N-acetyl-D-muramate 6-phosphate + ADP + H(+). The protein operates within amino-sugar metabolism; 1,6-anhydro-N-acetylmuramate degradation. Its pathway is cell wall biogenesis; peptidoglycan recycling. Its function is as follows. Catalyzes the specific phosphorylation of 1,6-anhydro-N-acetylmuramic acid (anhMurNAc) with the simultaneous cleavage of the 1,6-anhydro ring, generating MurNAc-6-P. Is required for the utilization of anhMurNAc either imported from the medium or derived from its own cell wall murein, and thus plays a role in cell wall recycling. This is Anhydro-N-acetylmuramic acid kinase from Burkholderia mallei (strain NCTC 10229).